A 117-amino-acid chain; its full sequence is Probable non-functional immunoglobulin heavy variable 7-81 (117 aa).

Residues 1–19 (MDWTWSILFLVAAATGTYS) form the signal peptide. Residues 20-44 (QVQLVQSGHEVKQPGASVKVSCKAS) form a framework-1 region. The 98-residue stretch at 20–117 (QVQLVQSGHE…EDMAMYYCAR (98 aa)) folds into the Ig-like domain. The cysteines at positions 41 and 115 are disulfide-linked. The interval 45-52 (GYSFTTYG) is complementarity-determining-1. Residues 53-69 (MNWVPQAPGQGLEWMGW) form a framework-2 region. Residues 70 to 77 (FNTYTGNP) are complementarity-determining-2. Residue Asn-76 is glycosylated (N-linked (GlcNAc...) asparagine). Residues 78–115 (TYAQGFTGRFVFSMDTSASTAYLQISSLKAEDMAMYYC) form a framework-3 region. Positions 116–117 (AR) are complementarity-determining-3.

Immunoglobulins are composed of two identical heavy chains and two identical light chains; disulfide-linked.

The protein localises to the secreted. Its subcellular location is the cell membrane. Functionally, probable non-functional open reading frame (ORF) of V region of the variable domain of immunoglobulin heavy chains. Non-functional ORF generally cannot participate in the synthesis of a productive immunoglobulin chain due to altered V-(D)-J or switch recombination and/or splicing site (at mRNA level) and/or conserved amino acid change (protein level). Immunoglobulins, also known as antibodies, are membrane-bound or secreted glycoproteins produced by B lymphocytes. In the recognition phase of humoral immunity, the membrane-bound immunoglobulins serve as receptors which, upon binding of a specific antigen, trigger the clonal expansion and differentiation of B lymphocytes into immunoglobulins-secreting plasma cells. Secreted immunoglobulins mediate the effector phase of humoral immunity, which results in the elimination of bound antigens. The antigen binding site is formed by the variable domain of one heavy chain, together with that of its associated light chain. Thus, each immunoglobulin has two antigen binding sites with remarkable affinity for a particular antigen. The variable domains are assembled by a process called V-(D)-J rearrangement and can then be subjected to somatic hypermutations which, after exposure to antigen and selection, allow affinity maturation for a particular antigen. This chain is Probable non-functional immunoglobulin heavy variable 7-81, found in Homo sapiens (Human).